We begin with the raw amino-acid sequence, 275 residues long: tRNA-splicing endonuclease subunit SEN34 (275 aa).

Catalysis depends on residues Y209, H217, and K250.

This sequence belongs to the tRNA-intron endonuclease family. In terms of assembly, heterotetramer composed of SEN2, SEN15, SEN34 and SEN54. Interacts directly with SEN15.

Its subcellular location is the nucleus. The protein resides in the endomembrane system. The protein localises to the mitochondrion outer membrane. The catalysed reaction is pretRNA = a 3'-half-tRNA molecule with a 5'-OH end + a 5'-half-tRNA molecule with a 2',3'-cyclic phosphate end + an intron with a 2',3'-cyclic phosphate and a 5'-hydroxyl terminus.. Its function is as follows. Constitutes one of the two catalytic subunit of the tRNA-splicing endonuclease complex, a complex responsible for identification and cleavage of the splice sites in pre-tRNA. It cleaves pre-tRNA at the 5'- and 3'-splice sites to release the intron. The products are an intron and two tRNA half-molecules bearing 2',3'-cyclic phosphate and 5'-OH termini. There are no conserved sequences at the splice sites, but the intron is invariably located at the same site in the gene, placing the splice sites an invariant distance from the constant structural features of the tRNA body. It probably carries the active site for 3'-splice site cleavage. This Saccharomyces cerevisiae (strain ATCC 204508 / S288c) (Baker's yeast) protein is tRNA-splicing endonuclease subunit SEN34 (SEN34).